The chain runs to 353 residues: MATVPSNPAFAPTLSTRGRLNGILFVALFAVAVTQLAAMPAIANLGISPLIVGIVAGALYGNALRDGVPASWAAGINFSARGLLRIAVAFFGLRVSLQEIAEVGWSGLIVSVLVVTSTLLIGLWCGMKVFKLDRDTALLTAAGSAICGAAAVLAFESALRSAPHKSAMAVGSVVLFGTLSMFLYPLAINAGWLHLDTMGAGLLLGGTVHEVAQVVGAASNVSPEATHVATIVKMTRVMLLVPVLLVVGLWISRSRKAGQAQGNGRIAMPWFAFGFLALVLVNSMQVLPGSVTQAVNSLDTFALTMAMTALGMETRFSQIRQAGPRALATGAILNLWLVGGGLAITLGVQKLLG.

Transmembrane regions (helical) follow at residues 20–42 (LNGI…MPAI), 70–92 (ASWA…AFFG), 105–127 (WSGL…WCGM), 137–159 (ALLT…ESAL), 166–188 (SAMA…PLAI), 234–253 (MTRV…WISR), 266–288 (IAMP…QVLP), and 326–348 (ALAT…TLGV).

The protein belongs to the UPF0324 family.

The protein resides in the cell membrane. The polypeptide is UPF0324 membrane protein PP_3661 (Pseudomonas putida (strain ATCC 47054 / DSM 6125 / CFBP 8728 / NCIMB 11950 / KT2440)).